Here is a 322-residue protein sequence, read N- to C-terminus: Protein CCC1 (322 aa).

Over 1-99 the chain is Cytoplasmic; sequence MSIVALKNAV…LGFFQSVDPR (99 aa). A disordered region spans residues 19 to 86; that stretch reads GSGGTSELGG…RNGDNGSDNE (68 aa). Over residues 26 to 53 the composition is skewed to low complexity; that stretch reads LGGSESTPLLRGSNSNSSRHDNLSSSSS. A phosphoserine mark is found at serine 29, serine 53, serine 68, serine 71, and serine 83. Positions 60-70 are enriched in polar residues; sequence NSAQDLENSPM. The chain crosses the membrane as a helical span at residues 100–120; it reads VISDLIIGLSDGLTVPFALTA. The Vacuolar segment spans residues 121-129; sequence GLSSLGDAK. A helical membrane pass occupies residues 130 to 150; that stretch reads LVITGGFAELISGAISMGLGG. Topologically, residues 151–236 are cytoplasmic; it reads YLGAKSESDY…PAENRELISA (86 aa). The helical transmembrane segment at 237 to 257 threads the bilayer; the sequence is VTIGGGYLLGGLVPLVPYFFV. Over 258–259 the chain is Vacuolar; it reads SD. A helical transmembrane segment spans residues 260–280; the sequence is VGTGLIYSIIVMVVTLFWFGY. The Cytoplasmic portion of the chain corresponds to 281-300; that stretch reads VKTKLSMGSGSSTSKKVTEG. Residues 301–321 form a helical membrane-spanning segment; that stretch reads VEMVVVGGVAAGAAWFFVKLL. Position 322 (glycine 322) is a topological domain, vacuolar.

This sequence belongs to the CCC1 family.

Its subcellular location is the golgi apparatus membrane. The protein localises to the vacuole membrane. The enzyme catalyses Fe(2+)(in) = Fe(2+)(out). Has a role in both calcium and manganese homeostasis. Involved in the transfer of iron and Mn(2+) from the cytosol to the vacuole for storage of these metals. The polypeptide is Protein CCC1 (CCC1) (Saccharomyces cerevisiae (strain ATCC 204508 / S288c) (Baker's yeast)).